Reading from the N-terminus, the 438-residue chain is MSCSKGLSQSLKEDRISQLPDPLLTQILNLLPTEEAVKTSVLSTRWRTLWLWVPNLELSFSKFPCFNAFLSFGNLFFDSDRASCVESLKLYLDGNDASYLKPWVDALVKRKIQRLYVRRTLGGYSHVMPLSLYVCDSLVSLRLYRLSLVDAEFVSLPCLKILRLKDIVFHNETTFERLVSSCPVLEELKIDVVWNDGNVYKVHSRSLKRFCFRSSSLRFDESVPGVVVDAPLLCCLIIDDSVSESFVVTDLESNAKFDISLCFRLWRFDEAKRSIINMFLAWISRVRDMKICAHTFKLIHRYSESSPLPRFGYMSSLYVTLNASELEWFPIFLRSSPNLKSLILERSGSSHQLSRKAMERVSMSSVPECLLTSLEFVEFKAPICGLGPEMMLVWYFLKNSPTLKKLTLPLKSHSTKDDFFKKLLEIPRCSTECEIVIL.

Positions Glu13–Ser59 constitute an F-box domain. LRR repeat units lie at residues Cys135–Asp166, Ile167–Val192, Cys235–Leu261, and Tyr318–Arg346. Positions Ser362–Pro409 constitute an FBD domain.

The chain is Putative F-box/FBD/LRR-repeat protein At2g05300 from Arabidopsis thaliana (Mouse-ear cress).